The chain runs to 153 residues: D-aminoacyl-tRNA deacylase (153 aa).

Positions 140–141 (GP) match the Gly-cisPro motif, important for rejection of L-amino acids motif.

It belongs to the DTD family. In terms of assembly, homodimer.

The protein localises to the cytoplasm. It carries out the reaction glycyl-tRNA(Ala) + H2O = tRNA(Ala) + glycine + H(+). It catalyses the reaction a D-aminoacyl-tRNA + H2O = a tRNA + a D-alpha-amino acid + H(+). An aminoacyl-tRNA editing enzyme that deacylates mischarged D-aminoacyl-tRNAs. Also deacylates mischarged glycyl-tRNA(Ala), protecting cells against glycine mischarging by AlaRS. Acts via tRNA-based rather than protein-based catalysis; rejects L-amino acids rather than detecting D-amino acids in the active site. By recycling D-aminoacyl-tRNA to D-amino acids and free tRNA molecules, this enzyme counteracts the toxicity associated with the formation of D-aminoacyl-tRNA entities in vivo and helps enforce protein L-homochirality. In Trichodesmium erythraeum (strain IMS101), this protein is D-aminoacyl-tRNA deacylase.